Consider the following 426-residue polypeptide: Serine--tRNA ligase (426 aa).

Position 229-231 (229-231 (TAE)) interacts with L-serine. 260 to 262 (RSE) is an ATP binding site. Glutamate 283 is an L-serine binding site. Position 347 to 350 (347 to 350 (EIAS)) interacts with ATP. Serine 383 contacts L-serine.

This sequence belongs to the class-II aminoacyl-tRNA synthetase family. Type-1 seryl-tRNA synthetase subfamily. As to quaternary structure, homodimer. The tRNA molecule binds across the dimer.

The protein localises to the cytoplasm. The catalysed reaction is tRNA(Ser) + L-serine + ATP = L-seryl-tRNA(Ser) + AMP + diphosphate + H(+). It catalyses the reaction tRNA(Sec) + L-serine + ATP = L-seryl-tRNA(Sec) + AMP + diphosphate + H(+). The protein operates within aminoacyl-tRNA biosynthesis; selenocysteinyl-tRNA(Sec) biosynthesis; L-seryl-tRNA(Sec) from L-serine and tRNA(Sec): step 1/1. In terms of biological role, catalyzes the attachment of serine to tRNA(Ser). Is also able to aminoacylate tRNA(Sec) with serine, to form the misacylated tRNA L-seryl-tRNA(Sec), which will be further converted into selenocysteinyl-tRNA(Sec). The chain is Serine--tRNA ligase from Rickettsia bellii (strain OSU 85-389).